Here is a 129-residue protein sequence, read N- to C-terminus: Small ribosomal subunit protein uS11 (129 aa).

It belongs to the universal ribosomal protein uS11 family. As to quaternary structure, part of the 30S ribosomal subunit. Interacts with proteins S7 and S18. Binds to IF-3.

Functionally, located on the platform of the 30S subunit, it bridges several disparate RNA helices of the 16S rRNA. Forms part of the Shine-Dalgarno cleft in the 70S ribosome. The polypeptide is Small ribosomal subunit protein uS11 (Azoarcus sp. (strain BH72)).